Reading from the N-terminus, the 207-residue chain is Putative 3-methyladenine DNA glycosylase (207 aa).

The protein belongs to the DNA glycosylase MPG family.

The chain is Putative 3-methyladenine DNA glycosylase from Burkholderia lata (strain ATCC 17760 / DSM 23089 / LMG 22485 / NCIMB 9086 / R18194 / 383).